Reading from the N-terminus, the 229-residue chain is Prolactin (229 aa).

A signal peptide spans 1-30 (MDNKGWSLKGSLLFLLLLLSDLLLCKSVAS). Cysteines 34 and 41 form a disulfide. Serine 56 bears the Phosphoserine mark. N-linked (GlcNAc...) asparagine glycosylation is present at asparagine 61. Residues serine 64 and serine 120 each carry the phosphoserine modification. Intrachain disulfides connect cysteine 88–cysteine 204 and cysteine 221–cysteine 229.

This sequence belongs to the somatotropin/prolactin family. Interacts with PRLR.

It is found in the secreted. Functionally, prolactin acts primarily on the mammary gland by promoting lactation. This chain is Prolactin (PRL), found in Felis catus (Cat).